We begin with the raw amino-acid sequence, 650 residues long: XK-related protein 4 (650 aa).

Residues 1–15 (MAAKSDGRLKMKKSS) are compositionally biased toward basic and acidic residues. The tract at residues 1 to 44 (MAAKSDGRLKMKKSSDVAFTPLQNSDHSGSVQGLAPGLPSGSGA) is disordered. Polar residues predominate over residues 21–31 (PLQNSDHSGSV). The next 2 membrane-spanning stretches (helical) occupy residues 114 to 134 (WILAAVAVYFADVGTDVWLAV) and 144 to 164 (WFGLTLFFVVLGSLSVQVFSF). The residue at position 200 (Ser200) is a Phosphoserine. A disordered region spans residues 200-238 (SAAGEGEARPSTPQRQASNASKSNIAAANSGSNSSGATR). The segment covering 216-238 (ASNASKSNIAAANSGSNSSGATR) has biased composition (low complexity). Helical transmembrane passes span 248–268 (CSFCIWLLQSLIHILQLGQIW), 306–326 (HLLATFLESAPQLVLQLCIIV), 331–351 (LQALQGFTAAASLVSLAWALA), 365–385 (KPISYMAVIIQFCWHFFTIAA), 396–418 (VFQLYFGIFIVLHWCIMTFWIVH), 428–448 (WEEIVFDMVVGIIYIFSWFNV), 457–477 (LFIYYFVILLENTALSALWYL), and 487–507 (FAIPALCVVFSSFLTGVVFML).

This sequence belongs to the XK family. In terms of assembly, homodimer; homodimerization takes place upon caspase cleavage. Interacts with the processed C-terminus of XRCC4 (protein XRCC4, C-terminus); interaction promotes the phospholipid scramblase activity. Undergoes proteolytic processing by caspase-3 (CASP3), caspase-6 (CASP6) and caspase-7 (CASP7) to generate the XK-related protein 4, processed form, leading to its activation.

It is found in the cell membrane. It carries out the reaction a 1,2-diacyl-sn-glycero-3-phospho-L-serine(in) = a 1,2-diacyl-sn-glycero-3-phospho-L-serine(out). Its activity is regulated as follows. Phospholipid scramblase activity is activated upon caspase cleavage to generate the XK-related protein 4, processed form. Does not act prior the onset of apoptosis. With respect to regulation, homodimerizes upon caspase cleavage. Phospholipid scramblase activity is activated following interaction with the processed C-terminus of XRCC4 (protein XRCC4, C-terminus). Functionally, phospholipid scramblase that promotes phosphatidylserine exposure on apoptotic cell surface. Phosphatidylserine is a specific marker only present at the surface of apoptotic cells and acts as a specific signal for engulfment. This chain is XK-related protein 4, found in Homo sapiens (Human).